The following is a 303-amino-acid chain: MRVALLMGGVSREREISLRSGERVKKALEKLGYEHTVFDVREDFLKKVDQLKSFDVVFNVLHGTFGEDGTLQAILDFLGIRYTGSDAFSSMICFDKLVTYRFLKGTVEIPDFVEIKEFMKTSPLGYPCVVKPRREGSSIGVFVCESDEEFQHALKEDLPRYGSVIVQKYIPGREMTVSILETEKGFEILPVLELRPKRRFYDYVAKYTKGETEFILPAPLNPSEERLVKEMALKAFVEAGCRGFGRVDGIFSDGRFYFLEINTVPGLTETSDLPASAKAGGIEFEELVEIILKSAFLKEGVRV.

One can recognise an ATP-grasp domain in the interval 99–293 (TYRFLKGTVE…FEELVEIILK (195 aa)). 125–176 (GYPCVVKPRREGSSIGVFVCESDEEFQHALKEDLPRYGSVIVQKYIPGREMT) provides a ligand contact to ATP. Positions 248, 260, and 262 each coordinate Mg(2+).

It belongs to the D-alanine--D-alanine ligase family. Requires Mg(2+) as cofactor. It depends on Mn(2+) as a cofactor.

It localises to the cytoplasm. The enzyme catalyses 2 D-alanine + ATP = D-alanyl-D-alanine + ADP + phosphate + H(+). The protein operates within cell wall biogenesis; peptidoglycan biosynthesis. In terms of biological role, cell wall formation. The polypeptide is D-alanine--D-alanine ligase (Thermotoga maritima (strain ATCC 43589 / DSM 3109 / JCM 10099 / NBRC 100826 / MSB8)).